The chain runs to 291 residues: Formamidopyrimidine-DNA glycosylase (291 aa).

Residue Pro-2 is the Schiff-base intermediate with DNA of the active site. The active-site Proton donor is the Glu-3. The active-site Proton donor; for beta-elimination activity is Lys-60. The DNA site is built by His-97, Arg-116, and Arg-161. The FPG-type zinc finger occupies 246 to 280; that stretch reads WVYNRAGEPCRVCGMPIQRIRLAGRSSHFCSECQT. Arg-270 serves as the catalytic Proton donor; for delta-elimination activity.

It belongs to the FPG family. In terms of assembly, monomer. It depends on Zn(2+) as a cofactor.

It catalyses the reaction Hydrolysis of DNA containing ring-opened 7-methylguanine residues, releasing 2,6-diamino-4-hydroxy-5-(N-methyl)formamidopyrimidine.. The catalysed reaction is 2'-deoxyribonucleotide-(2'-deoxyribose 5'-phosphate)-2'-deoxyribonucleotide-DNA = a 3'-end 2'-deoxyribonucleotide-(2,3-dehydro-2,3-deoxyribose 5'-phosphate)-DNA + a 5'-end 5'-phospho-2'-deoxyribonucleoside-DNA + H(+). Involved in base excision repair of DNA damaged by oxidation or by mutagenic agents. Acts as a DNA glycosylase that recognizes and removes damaged bases. Has a preference for oxidized purines, such as 7,8-dihydro-8-oxoguanine (8-oxoG). Has AP (apurinic/apyrimidinic) lyase activity and introduces nicks in the DNA strand. Cleaves the DNA backbone by beta-delta elimination to generate a single-strand break at the site of the removed base with both 3'- and 5'-phosphates. In Nostoc punctiforme (strain ATCC 29133 / PCC 73102), this protein is Formamidopyrimidine-DNA glycosylase.